Reading from the N-terminus, the 597-residue chain is Gamma-terpinene synthase, chloroplastic (597 aa).

The transit peptide at 1–47 (MATLSMQVSILSKQVKNLNSFGMRASKLPMVARRVDVSTTRLRPICS) directs the protein to the chloroplast. Mn(2+) contacts are provided by aspartate 350 and aspartate 354. A DDXXD motif motif is present at residues 350–354 (DDVYD). 2 homodimerization regions span residues 356-362 (YGTLDEL) and 428-465 (EAKWYYAGYTPTLAEYLENAKVSISSPTIISQVYFTLP). Positions 494 and 502 each coordinate Mn(2+).

It belongs to the terpene synthase family. In terms of assembly, homodimer. Mn(2+) serves as cofactor. The cofactor is Mg(2+).

The protein resides in the plastid. It localises to the chloroplast. The enzyme catalyses (2E)-geranyl diphosphate = gamma-terpinene + diphosphate. It functions in the pathway secondary metabolite biosynthesis; terpenoid biosynthesis. Functionally, involved in the biosynthesis of phenolic monoterpenes natural products thymol and carvacrol which have a broad range of biological activities acting as antimicrobial compounds, insecticides, antioxidants and pharmaceutical agents. Monoterpene synthase which catalyzes the conversion of geranyl diphosphate (GPP) to gamma-terpinene and minor amounts of other monoterpenes (e.g. alpha-thujene, alpha-terpinene, myrcene, sabinene, (+)-R-limonene, alpha-pinene and alpha-phellandrene). In Thymus caespititius (Cretan thyme), this protein is Gamma-terpinene synthase, chloroplastic.